Reading from the N-terminus, the 168-residue chain is Cytochrome c-type biogenesis protein CcmE (168 aa).

At 1 to 7 (MTRKQRR) the chain is on the cytoplasmic side. A helical; Signal-anchor for type II membrane protein membrane pass occupies residues 8–28 (LMLIGVCGAVLAVALGLVLWA). At 29–168 (MRGTIVFFRS…SGEKPALRQQ (140 aa)) the chain is on the periplasmic side. The heme site is built by H122 and Y126. A disordered region spans residues 134–168 (ALKKQGHWQGEAKHPGGTAPAPQTASGEKPALRQQ).

It belongs to the CcmE/CycJ family.

The protein localises to the cell inner membrane. In terms of biological role, heme chaperone required for the biogenesis of c-type cytochromes. Transiently binds heme delivered by CcmC and transfers the heme to apo-cytochromes in a process facilitated by CcmF and CcmH. This Methylobacterium nodulans (strain LMG 21967 / CNCM I-2342 / ORS 2060) protein is Cytochrome c-type biogenesis protein CcmE.